Here is a 356-residue protein sequence, read N- to C-terminus: Peptide chain release factor 1 (356 aa).

Q233 is modified (N5-methylglutamine).

Belongs to the prokaryotic/mitochondrial release factor family. In terms of processing, methylated by PrmC. Methylation increases the termination efficiency of RF1.

It is found in the cytoplasm. In terms of biological role, peptide chain release factor 1 directs the termination of translation in response to the peptide chain termination codons UAG and UAA. The polypeptide is Peptide chain release factor 1 (Halalkalibacterium halodurans (strain ATCC BAA-125 / DSM 18197 / FERM 7344 / JCM 9153 / C-125) (Bacillus halodurans)).